A 167-amino-acid chain; its full sequence is Neutrophilic granule protein (167 aa).

Residues 1–21 (MAGLWKTFVLVVALAVVSCEA) form the signal peptide. The interval 122-141 (EDTQETSFNDKQDVSEKEKF) is disordered.

This sequence belongs to the cathelicidin family. Monomer. Homodimer; disulfide-linked. Expressed in myeloid bone marrow cells. Expressed in neutrophilic precursors (at protein level). Expressed in myeloid bone marrow cells.

Its subcellular location is the secreted. It is found in the cytoplasmic granule. Its function is as follows. Acts as an inhibitor of cathepsin B (CTSB) activity. Plays a role as a negative regulator of tumor vascular development, cell invasion and metastasis. This chain is Neutrophilic granule protein, found in Mus musculus (Mouse).